The primary structure comprises 253 residues: DNA polymerase sliding clamp 2 (253 aa).

This sequence belongs to the PCNA family. In terms of assembly, homotrimer. The subunits circularize to form a toroid; DNA passes through its center. Replication factor C (RFC) is required to load the toroid on the DNA. Interacts with TIP.

Inhibited by interaction with the PCNA inhibitor TIP. Its function is as follows. Sliding clamp subunit that acts as a moving platform for DNA processing. Responsible for tethering the catalytic subunit of DNA polymerase and other proteins to DNA during high-speed replication. The protein is DNA polymerase sliding clamp 2 of Thermococcus kodakarensis (strain ATCC BAA-918 / JCM 12380 / KOD1) (Pyrococcus kodakaraensis (strain KOD1)).